Reading from the N-terminus, the 338-residue chain is Cytochrome c biogenesis protein CcsA (338 aa).

8 helical membrane passes run 15 to 35, 36 to 56, 71 to 91, 97 to 117, 142 to 162, 246 to 266, 273 to 293, and 307 to 327; these read FLVL…PNIP, GLTG…ATLL, LYES…VAEW, WVGV…ALSL, VMMI…AFLI, IIGL…VWAN, WSWD…AAYL, and AFLA…VNIL.

It belongs to the CcmF/CycK/Ccl1/NrfE/CcsA family. In terms of assembly, may interact with ccs1.

The protein localises to the cellular thylakoid membrane. In terms of biological role, required during biogenesis of c-type cytochromes (cytochrome c6 and cytochrome f) at the step of heme attachment. The protein is Cytochrome c biogenesis protein CcsA of Picosynechococcus sp. (strain ATCC 27264 / PCC 7002 / PR-6) (Agmenellum quadruplicatum).